The following is a 930-amino-acid chain: Bifunctional uridylyltransferase/uridylyl-removing enzyme (930 aa).

The interval 1–387 (MAPASEAGPA…IMGLFRRKKR (387 aa)) is uridylyltransferase. The interval 388–741 (LKPEYSLVNG…LDPDPDRDAT (354 aa)) is uridylyl-removing. Residues 504 to 626 (VDEHTIQCIS…VRSKKRLDLL (123 aa)) form the HD domain. ACT domains follow at residues 742-818 (RACF…VVAR) and 852-927 (IIEV…GAER).

Belongs to the GlnD family. Mg(2+) is required as a cofactor.

The catalysed reaction is [protein-PII]-L-tyrosine + UTP = [protein-PII]-uridylyl-L-tyrosine + diphosphate. The enzyme catalyses [protein-PII]-uridylyl-L-tyrosine + H2O = [protein-PII]-L-tyrosine + UMP + H(+). Uridylyltransferase (UTase) activity is inhibited by glutamine, while glutamine activates uridylyl-removing (UR) activity. Functionally, modifies, by uridylylation and deuridylylation, the PII regulatory proteins (GlnB and homologs), in response to the nitrogen status of the cell that GlnD senses through the glutamine level. Under low glutamine levels, catalyzes the conversion of the PII proteins and UTP to PII-UMP and PPi, while under higher glutamine levels, GlnD hydrolyzes PII-UMP to PII and UMP (deuridylylation). Thus, controls uridylylation state and activity of the PII proteins, and plays an important role in the regulation of nitrogen fixation and metabolism. This chain is Bifunctional uridylyltransferase/uridylyl-removing enzyme, found in Cereibacter sphaeroides (strain ATCC 17023 / DSM 158 / JCM 6121 / CCUG 31486 / LMG 2827 / NBRC 12203 / NCIMB 8253 / ATH 2.4.1.) (Rhodobacter sphaeroides).